A 207-amino-acid polypeptide reads, in one-letter code: uncharacterized protein (207 aa).

Residues Arg80, Glu88, and Arg148 contribute to the active site.

The protein belongs to the thermonuclease family.

This is an uncharacterized protein from Methanocaldococcus jannaschii (strain ATCC 43067 / DSM 2661 / JAL-1 / JCM 10045 / NBRC 100440) (Methanococcus jannaschii).